A 30-amino-acid chain; its full sequence is V-type proton ATPase catalytic subunit A isoform 2 (30 aa).

The protein belongs to the ATPase alpha/beta chains family. In terms of assembly, V-ATPase is a heteromultimeric enzyme composed of a peripheral catalytic V1 complex (main components: subunits A, B, C, D, E, and F) attached to an integral membrane V0 proton pore complex (main component: the proteolipid protein).

The catalysed reaction is ATP + H2O + 4 H(+)(in) = ADP + phosphate + 5 H(+)(out). Functionally, catalytic subunit of the peripheral V1 complex of vacuolar ATPase. V-ATPase vacuolar ATPase is responsible for acidifying a variety of intracellular compartments in eukaryotic cells. This chain is V-type proton ATPase catalytic subunit A isoform 2, found in Equisetum arvense (Field horsetail).